Here is a 737-residue protein sequence, read N- to C-terminus: FYVE, RhoGEF and PH domain-containing protein 3 (737 aa).

Positions 1-151 (MESGGGSSTP…KADKDAGLAQ (151 aa)) are disordered. Over residues 126-136 (ADSDVGEEPDS) the composition is skewed to acidic residues. The residue at position 128 (Ser-128) is a Phosphoserine. The region spanning 157-341 (KLLHIAQELL…STAANHSNAA (185 aa)) is the DH domain. Residues 370 to 469 (ELIKEGQIQK…WIQIIQATIE (100 aa)) enclose the PH 1 domain. The interval 487 to 533 (QDEDPSLSPDMPITSTSPVEPVVTTEGGSGAAGLEPRKLSSKTRRDK) is disordered. The span at 500–512 (TSTSPVEPVVTTE) shows a compositional bias: low complexity. Positions 521–533 (EPRKLSSKTRRDK) are enriched in basic and acidic residues. The FYVE-type zinc finger occupies 532–588 (DKEKQSCKSCGETFNSITKRRHHCKLCGVVICGKCSEFKAENSRQSRVCRECFLTQP). Zn(2+) contacts are provided by Cys-538, Cys-541, Cys-555, Cys-558, Cys-563, Cys-566, Cys-580, and Cys-583. 2 disordered regions span residues 589–620 (VAPE…SLLC) and 713–737 (AARG…AAAP). Positions 616-715 (PSLLCGPLRL…WLETLSTAAR (100 aa)) constitute a PH 2 domain.

The protein localises to the cytoplasm. The protein resides in the cytoskeleton. Promotes the formation of filopodia. May activate CDC42, a member of the Ras-like family of Rho- and Rac proteins, by exchanging bound GDP for free GTP. Plays a role in regulating the actin cytoskeleton and cell shape. This chain is FYVE, RhoGEF and PH domain-containing protein 3 (FGD3), found in Pongo abelii (Sumatran orangutan).